Consider the following 570-residue polypeptide: Serine/threonine-protein kinase Pink1, mitochondrial (570 aa).

Residues 1–5 (MSVRA) constitute a mitochondrion transit peptide. The Mitochondrial intermembrane portion of the chain corresponds to 6 to 96 (VGSRLFKHGR…AELRKKATRR (91 aa)). Residues 97 to 120 (ILFGDSAPFFALVGVSIASGTGIL) form a helical membrane-spanning segment. Topologically, residues 121 to 570 (TKEEELEGVC…WIQENLPELD (450 aa)) are cytoplasmic. One can recognise a Protein kinase domain in the interval 162–484 (LSLGKPIAKG…VAANVCQLFL (323 aa)). Lysine 196 serves as a coordination point for ATP. A Phosphoserine; by autocatalysis modification is found at serine 205. Glutamate 217 lines the Mg(2+) pocket. ATP is bound by residues lysine 295, tyrosine 297, and asparagine 300. Aspartate 337 functions as the Proton acceptor in the catalytic mechanism. Residue aspartate 341 coordinates ATP. Asparagine 342 and aspartate 359 together coordinate Mg(2+). Residue aspartate 359 coordinates ATP. Serine 377 bears the Phosphoserine; by autocatalysis mark. The residue at position 386 (threonine 386) is a Phosphothreonine; by autocatalysis. Threonine 530 carries the phosphothreonine modification.

The protein belongs to the protein kinase superfamily. Ser/Thr protein kinase family. The cofactor is Mg(2+). In terms of processing, proteolytically cleaved. In healthy cells, the precursor is continuously imported into mitochondria where it is proteolytically cleaved into its short form by the mitochondrial rhomboid protease rho-7 (TcasGA2_TC013516). The short form is then released into the cytosol where it rapidly undergoes proteasome-dependent degradation. In unhealthy cells, when cellular stress conditions lead to the loss of mitochondrial membrane potential, mitochondrial import is impaired leading to the precursor accumulating on the outer mitochondrial membrane (OMM). Autophosphorylated on Ser-205, which activates kinase activity and is required for substrate recognition. Loss of mitochondrial membrane potential results in the precursor accumulating on the outer mitochondrial membrane (OMM) where it is activated by autophosphorylation at Ser-205. Autophosphorylation is sufficient and essential for selective recruitment of park to depolarized mitochondria, likely via Pink1-dependent phosphorylation of polyubiquitin chains. Also autophosphorylated at Ser-377, Thr-386 and possibly Thr-530. Another report found evidence of autophosphorylation at Ser-154, Thr-186, Thr-218, Ser-267 and Thr-530, as well as a number of other minor sites, but determined that phosphorylation at these sites is not required for enzyme activity and may not occur in vivo.

It is found in the mitochondrion outer membrane. The protein localises to the mitochondrion inner membrane. It localises to the cytoplasm. Its subcellular location is the cytosol. The enzyme catalyses L-seryl-[protein] + ATP = O-phospho-L-seryl-[protein] + ADP + H(+). It catalyses the reaction L-threonyl-[protein] + ATP = O-phospho-L-threonyl-[protein] + ADP + H(+). In terms of biological role, acts as a serine/threonine-protein kinase. Exhibits a substrate preference for proline at position P+1 and a general preference at several residues for basic residues such as arginine. Also exhibits moderate preferences for a phosphotyrosine at position P-3 and a tryptophan at P-5. Critical to mitochondrial homeostasis it mediates several pathways that maintain mitochondrial health and function. Protects against mitochondrial dysfunction during cellular stress by phosphorylating mitochondrial proteins such as park and likely Drp1, to coordinate mitochondrial quality control mechanisms that remove and replace dysfunctional mitochondrial components. Depending on the severity of mitochondrial damage and/or dysfunction, activity ranges from preventing apoptosis and stimulating mitochondrial biogenesis to regulating mitochondrial dynamics and eliminating severely damaged mitochondria via mitophagy. Appears to be particularly important in maintaining the physiology and function of cells with high energy demands that are undergoing stress or altered metabolic environment, including spermatids, muscle cells and neurons such as the dopaminergic (DA) neurons. Mediates the translocation and activation of park at the outer membrane (OMM) of dysfunctional/depolarized mitochondria. At the OMM of damaged mitochondria, phosphorylates pre-existing polyubiquitin chains, the Pink1-phosphorylated polyubiquitin then recruits park from the cytosol to the OMM where park is fully activated by phosphorylation at 'Ser-80' by Pink1. When cellular stress results in irreversible mitochondrial damage, functions with park to promote the clearance of dysfunctional and/or depolarized mitochondria by selective autophagy (mitophagy). The Pink1-park pathway also promotes fission and/or inhibits fusion of damaged mitochondria, by phosphorylating and thus promoting the park-dependent degradation of proteins involved in mitochondrial fusion/fission such as Marf, Opa1 and fzo. This prevents the refusion of unhealthy mitochondria with the mitochondrial network or initiates mitochondrial fragmentation facilitating their later engulfment by autophagosomes. Also likely to promote mitochondrial fission independently of park and Atg7-mediated mitophagy, via the phosphorylation and activation of Drp1. Regulates motility of damaged mitochondria by phosphorylating Miro which likely promotes its park-dependent degradation by the proteasome; in motor neurons, this inhibits mitochondrial intracellular anterograde transport along the axons which probably increases the chance of the mitochondria being eliminated in the soma. The Pink1-park pathway is also involved in mitochondrial regeneration processes such as promoting mitochondrial biogenesis, activating localized mitochondrial repair, promoting selective turnover of mitochondrial proteins and initiating the mitochondrial import of endogenous proteins. Involved in mitochondrial biogenesis by promoting the park-dependent ubiquitination of transcriptional repressor Paris which leads to its subsequent proteasomal degradation and allows activation of the transcription factor srl. Functions with park to promote localized mitochondrial repair by activating the translation of specific nuclear-encoded mitochondrial RNAs (nc-mtRNAs) on the mitochondrial surface, including several key electron transport chain component nc-mtRNAs. During oogenesis, phosphorylates and inactivates larp on the membrane of defective mitochondria, thus impairing local translation and mtDNA replication and consequently, reducing transmission of deleterious mtDNA mutations to the mature oocyte. Phosphorylates the mitochondrial acyl-CoA dehydrogenase Mcad, and appears to be important for maintaining fatty acid and amino acid metabolism via a mechanism that is independent of it's role in maintaining production of ATP. The polypeptide is Serine/threonine-protein kinase Pink1, mitochondrial (Tribolium castaneum (Red flour beetle)).